The following is a 430-amino-acid chain: Serine--tRNA ligase (430 aa).

237–239 serves as a coordination point for L-serine; the sequence is TAE. Residue 268–270 participates in ATP binding; it reads RSE. Glutamate 291 contributes to the L-serine binding site. Residue 355–358 participates in ATP binding; that stretch reads EISS. Serine 391 provides a ligand contact to L-serine.

The protein belongs to the class-II aminoacyl-tRNA synthetase family. Type-1 seryl-tRNA synthetase subfamily. As to quaternary structure, homodimer. The tRNA molecule binds across the dimer.

The protein localises to the cytoplasm. The catalysed reaction is tRNA(Ser) + L-serine + ATP = L-seryl-tRNA(Ser) + AMP + diphosphate + H(+). It catalyses the reaction tRNA(Sec) + L-serine + ATP = L-seryl-tRNA(Sec) + AMP + diphosphate + H(+). The protein operates within aminoacyl-tRNA biosynthesis; selenocysteinyl-tRNA(Sec) biosynthesis; L-seryl-tRNA(Sec) from L-serine and tRNA(Sec): step 1/1. Functionally, catalyzes the attachment of serine to tRNA(Ser). Is also able to aminoacylate tRNA(Sec) with serine, to form the misacylated tRNA L-seryl-tRNA(Sec), which will be further converted into selenocysteinyl-tRNA(Sec). This Salmonella paratyphi C (strain RKS4594) protein is Serine--tRNA ligase.